The sequence spans 72 residues: V-type proton ATPase subunit e (72 aa).

Residues 1 to 2 are Lumenal-facing; it reads MS. A helical transmembrane segment spans residues 3-23; the sequence is FYTVVATFLSVVLASAVFWVL. The Cytoplasmic segment spans residues 24-34; the sequence is APKENQTVWRS. A helical transmembrane segment spans residues 35–55; the sequence is TIILSMSMMFLMWAVTYLSQL. Over 56 to 72 the chain is Lumenal; sequence HPLVVPRRSDLRPEFAE.

Belongs to the V-ATPase e1/e2 subunit family. In terms of assembly, V-ATPase is a heteromultimeric enzyme composed of a peripheral catalytic V1 complex (components A to H) attached to an integral membrane V0 proton pore complex (components: a, c, c', c'', d, e, f and VOA1).

It is found in the vacuole membrane. Subunit of the V0 complex of vacuolar(H+)-ATPase (V-ATPase), a multisubunit enzyme composed of a peripheral complex (V1) that hydrolyzes ATP and a membrane integral complex (V0) that translocates protons. V-ATPase is responsible for acidifying and maintaining the pH of intracellular compartments. The sequence is that of V-type proton ATPase subunit e (VMA9) from Eremothecium gossypii (strain ATCC 10895 / CBS 109.51 / FGSC 9923 / NRRL Y-1056) (Yeast).